A 389-amino-acid chain; its full sequence is Na(+)/H(+) antiporter NhaA (389 aa).

11 consecutive transmembrane segments (helical) span residues 17–37 (ILLL…LAGL), 59–79 (LLLW…GLEV), 95–115 (SLPT…YLLF), 124–144 (AGWA…MALL), 154–174 (VFLL…IALF), 177–197 (TDLS…LVAL), 213–233 (LVLW…GVII), 261–281 (FLIL…NMSL), 287–307 (PVPV…VMLF), 328–348 (IAPV…IASL), and 363–383 (LGTL…LSKV).

Belongs to the NhaA Na(+)/H(+) (TC 2.A.33) antiporter family.

It localises to the cell inner membrane. It catalyses the reaction Na(+)(in) + 2 H(+)(out) = Na(+)(out) + 2 H(+)(in). Its function is as follows. Na(+)/H(+) antiporter that extrudes sodium in exchange for external protons. The protein is Na(+)/H(+) antiporter NhaA of Shewanella sp. (strain MR-7).